Here is a 323-residue protein sequence, read N- to C-terminus: Beta-ketoacyl-[acyl-carrier-protein] synthase III (323 aa).

Catalysis depends on residues cysteine 112 and histidine 250. An ACP-binding region spans residues 251 to 255 (QANQR). Asparagine 280 is a catalytic residue.

Belongs to the thiolase-like superfamily. FabH family. As to quaternary structure, homodimer.

It localises to the cytoplasm. The catalysed reaction is malonyl-[ACP] + acetyl-CoA + H(+) = 3-oxobutanoyl-[ACP] + CO2 + CoA. It functions in the pathway lipid metabolism; fatty acid biosynthesis. Its function is as follows. Catalyzes the condensation reaction of fatty acid synthesis by the addition to an acyl acceptor of two carbons from malonyl-ACP. Catalyzes the first condensation reaction which initiates fatty acid synthesis and may therefore play a role in governing the total rate of fatty acid production. Possesses both acetoacetyl-ACP synthase and acetyl transacylase activities. Its substrate specificity determines the biosynthesis of branched-chain and/or straight-chain of fatty acids. The polypeptide is Beta-ketoacyl-[acyl-carrier-protein] synthase III (Oenococcus oeni (strain ATCC BAA-331 / PSU-1)).